The primary structure comprises 484 residues: NADH-quinone oxidoreductase subunit N (484 aa).

The next 14 helical transmembrane spans lie at 11–31, 42–62, 79–98, 113–133, 134–154, 167–187, 211–231, 248–268, 279–299, 313–333, 335–355, 378–398, 408–428, and 457–477; these read SLWI…VLLI, VTYY…FNLI, MASV…MVYS, FVLV…YSLL, TLYL…AIAR, FVLG…IYGI, LIIN…LGAV, VTLF…VRIL, WSDL…VVAL, ISHV…GYGA, AFYM…IILL, FALM…LVGF, VVSA…VISA, and LVLS…DFWM.

It belongs to the complex I subunit 2 family. In terms of assembly, NDH-1 is composed of 14 different subunits. Subunits NuoA, H, J, K, L, M, N constitute the membrane sector of the complex.

It is found in the cell inner membrane. The catalysed reaction is a quinone + NADH + 5 H(+)(in) = a quinol + NAD(+) + 4 H(+)(out). NDH-1 shuttles electrons from NADH, via FMN and iron-sulfur (Fe-S) centers, to quinones in the respiratory chain. The immediate electron acceptor for the enzyme in this species is believed to be ubiquinone. Couples the redox reaction to proton translocation (for every two electrons transferred, four hydrogen ions are translocated across the cytoplasmic membrane), and thus conserves the redox energy in a proton gradient. The chain is NADH-quinone oxidoreductase subunit N from Ruthia magnifica subsp. Calyptogena magnifica.